The following is a 170-amino-acid chain: Ecotin (170 aa).

Residues 1-21 (MNKASVVFSGLLMAVSASAIA) form the signal peptide. Cys-78 and Cys-115 form a disulfide bridge.

It belongs to the protease inhibitor I11 (ecotin) family. Homodimer.

Its subcellular location is the periplasm. Its function is as follows. General inhibitor of pancreatic serine proteases: inhibits chymotrypsin, trypsin, elastases, factor X, kallikrein as well as a variety of other proteases. The protein is Ecotin of Serratia proteamaculans (strain 568).